We begin with the raw amino-acid sequence, 116 residues long: Small ribosomal subunit protein bS16 (116 aa).

The protein belongs to the bacterial ribosomal protein bS16 family.

The polypeptide is Small ribosomal subunit protein bS16 (Chlamydia trachomatis serovar L2 (strain ATCC VR-902B / DSM 19102 / 434/Bu)).